A 419-amino-acid chain; its full sequence is UDP-N-acetylglucosamine 1-carboxyvinyltransferase (419 aa).

22-23 lines the phosphoenolpyruvate pocket; it reads KN. Arginine 91 is a UDP-N-acetyl-alpha-D-glucosamine binding site. Catalysis depends on cysteine 115, which acts as the Proton donor. Cysteine 115 is modified (2-(S-cysteinyl)pyruvic acid O-phosphothioketal). Residues 120–124, 160–163, aspartate 305, and isoleucine 327 contribute to the UDP-N-acetyl-alpha-D-glucosamine site; these read RPVDL and KVSV.

This sequence belongs to the EPSP synthase family. MurA subfamily.

The protein resides in the cytoplasm. The enzyme catalyses phosphoenolpyruvate + UDP-N-acetyl-alpha-D-glucosamine = UDP-N-acetyl-3-O-(1-carboxyvinyl)-alpha-D-glucosamine + phosphate. It functions in the pathway cell wall biogenesis; peptidoglycan biosynthesis. Cell wall formation. Adds enolpyruvyl to UDP-N-acetylglucosamine. This chain is UDP-N-acetylglucosamine 1-carboxyvinyltransferase, found in Klebsiella pneumoniae (strain 342).